The sequence spans 67 residues: Arasin 2 (67 aa).

Residues 1–25 (MERRTLLVVLLVCSCVVAAAAEASP) form the signal peptide. Residues 22–44 (EASPSRWPSPGRPRPFPGRPNPI) form a disordered region. Over residues 31 to 44 (PGRPRPFPGRPNPI) the composition is skewed to pro residues. Cystine bridges form between Cys-50–Cys-59 and Cys-52–Cys-57.

In terms of assembly, interacts with chitin through the N-terminal region (26-48). This interaction may be important, since chitin is a component of the fungal cell wall, as well as of the crab exoskeleton (permitting a possible action of arasin in wound healing in case of lesions). Disulfide bonds are important for activity especially against Gram-negative bacteria, since the linearization of the peptide causes a strong decrease of activity on these bacteria. In terms of tissue distribution, mainly expressed in hemocytes. No or very low expression in heart, gills, inestines, and epidermis.

Antimicrobial peptide that has a large activity spectrum with activity against Gram-positive, Gram-negative bacteria, as well as against fungi. Shows activity at micromolar concentrations. Displays minimal inhibitory concentration (MIC) values lower than minimal bactericidal concentrations (MBC). May have a dual mode of action depending on the peptide concentrations. At MIC concentrations, the peptide penetrates into the cytoplasm of target cells (tested on the Gram-negative E.coli). The two inner membrane proteins YgdD and SbmA may be required for this uptake. At concentrations higher than MIC, arasin may act by disrupting membranes. Does not show hemolytic activity. The sequence is that of Arasin 2 from Hyas araneus (Atlantic lyre crab).